The following is a 516-amino-acid chain: Acetylcholine receptor subunit alpha-like (516 aa).

A signal peptide spans 1–21 (MRSVTKYYLHGVVLFATGCAG). Residues 22 to 243 (NPDAKRLYDD…ITMRRKTLFY (222 aa)) lie on the Extracellular side of the membrane. 2 N-linked (GlcNAc...) asparagine glycosylation sites follow: Asn-45 and Asn-132. 2 disulfide bridges follow: Cys-149–Cys-163 and Cys-222–Cys-223. N-linked (GlcNAc...) asparagine glycosylation is present at Asn-233. 3 consecutive transmembrane segments (helical) span residues 244-264 (TVNL…VFYL), 274-294 (LSIS…EIIP), and 306-326 (FVLF…VVLN). Over 327–465 (VHFRSPQTHT…WKYVAMVLDR (139 aa)) the chain is Cytoplasmic. The helical transmembrane segment at 466-486 (PFLWIFTLAVVVGSAGIILQA) threads the bilayer.

It belongs to the ligand-gated ion channel (TC 1.A.9) family. Acetylcholine receptor (TC 1.A.9.1) subfamily.

Its subcellular location is the postsynaptic cell membrane. The protein localises to the cell membrane. Functionally, after binding acetylcholine, the AChR responds by an extensive change in conformation that affects all subunits and leads to opening of an ion-conducting channel across the plasma membrane. This is Acetylcholine receptor subunit alpha-like (ARA1) from Manduca sexta (Tobacco hawkmoth).